Consider the following 631-residue polypeptide: Mercuric reductase (631 aa).

2 HMA domains span residues 2-66 and 81-145; these read KKYR…YHPG and KKYR…YQPG. A metal cation is bound by residues Cys13, Cys16, Cys92, and Cys95. FAD-binding residues include Ala181, Gly201, and Thr206. The cysteines at positions 207 and 212 are disulfide-linked. Residues Lys216, Asp472, and Val480 each coordinate FAD. Hg(2+) contacts are provided by Cys628 and Cys629.

The protein belongs to the class-I pyridine nucleotide-disulfide oxidoreductase family. In terms of assembly, homodimer. It depends on FAD as a cofactor.

It carries out the reaction Hg + NADP(+) + H(+) = Hg(2+) + NADPH. Its function is as follows. Resistance to Hg(2+) in bacteria appears to be governed by a specialized system which includes mercuric reductase. MerA protein is responsible for volatilizing mercury as Hg(0). This Bacillus cereus protein is Mercuric reductase (merA).